Consider the following 134-residue polypeptide: Small ribosomal subunit protein uS11 (134 aa).

The disordered stretch occupies residues 1-22; it reads MAQKTRATAARKPRRKVNKNVT. The span at 9–18 shows a compositional bias: basic residues; the sequence is AARKPRRKVN.

The protein belongs to the universal ribosomal protein uS11 family. Part of the 30S ribosomal subunit. Interacts with proteins S7 and S18. Binds to IF-3.

Its function is as follows. Located on the platform of the 30S subunit, it bridges several disparate RNA helices of the 16S rRNA. Forms part of the Shine-Dalgarno cleft in the 70S ribosome. This chain is Small ribosomal subunit protein uS11, found in Kocuria rhizophila (strain ATCC 9341 / DSM 348 / NBRC 103217 / DC2201).